A 604-amino-acid polypeptide reads, in one-letter code: Elongation factor 4 (604 aa).

Positions 10-191 constitute a tr-type G domain; sequence KNIRNFSIIA…KIITTIPAPS (182 aa). GTP-binding positions include 22-27 and 138-141; these read DHGKST and NKID.

This sequence belongs to the TRAFAC class translation factor GTPase superfamily. Classic translation factor GTPase family. LepA subfamily.

Its subcellular location is the cell inner membrane. The catalysed reaction is GTP + H2O = GDP + phosphate + H(+). Required for accurate and efficient protein synthesis under certain stress conditions. May act as a fidelity factor of the translation reaction, by catalyzing a one-codon backward translocation of tRNAs on improperly translocated ribosomes. Back-translocation proceeds from a post-translocation (POST) complex to a pre-translocation (PRE) complex, thus giving elongation factor G a second chance to translocate the tRNAs correctly. Binds to ribosomes in a GTP-dependent manner. The protein is Elongation factor 4 of Helicobacter pylori (strain P12).